The sequence spans 317 residues: Melanocyte-stimulating hormone receptor (317 aa).

The Extracellular segment spans residues 1 to 37 (MPVQGSQRRLLGSLNSTPTATPHLGLAANQTGARCLE). An N-linked (GlcNAc...) asparagine glycan is attached at Asn-29. The chain crosses the membrane as a helical span at residues 38–63 (VSVPDGLFLSLGLVSLVENVLVVTAI). At 64–72 (AKNRNLHSP) the chain is on the cytoplasmic side. A helical membrane pass occupies residues 73-93 (MYCFICCLALSDLLVSGSNML). Topologically, residues 94-118 (ETAVTLLLEAGALAARAAVVQQLDN) are extracellular. Residues 119–140 (VIDVITCSSMLSSLCFLGAIAV) traverse the membrane as a helical segment. Over 141–163 (DRYISIFYALRYHSIVTLPRARR) the chain is Cytoplasmic. A helical membrane pass occupies residues 164–183 (AVAAIWVASVLFSTLFIAYY). Residues 184–191 (DHAAVLLC) lie on the Extracellular side of the membrane. The helical transmembrane segment at 192 to 211 (LVIFFLAMLVLMAVLYVHML) threads the bilayer. Over 212–240 (ARACQHAQGIARLHKRQRLAHQGFGLKGA) the chain is Cytoplasmic. Residues 241 to 266 (ATLTILLGIFFLCWGPFFLHLTLIVL) form a helical membrane-spanning segment. The Extracellular segment spans residues 267 to 279 (CPQHPTCSCIFKN). A helical transmembrane segment spans residues 280 to 300 (FNLFLALIICNAIIDPLIYAF). Topologically, residues 301–317 (RSQELRRTLKEVLLCSW) are cytoplasmic. Cys-315 carries the S-palmitoyl cysteine lipid modification.

It belongs to the G-protein coupled receptor 1 family. As to quaternary structure, interacts with MGRN1, but does not undergo MGRN1-mediated ubiquitination; this interaction competes with GNAS-binding and thus inhibits agonist-induced cAMP production. Interacts with OPN3; the interaction results in a decrease in MC1R-mediated cAMP signaling and ultimately a decrease in melanin production in melanocytes.

Its subcellular location is the cell membrane. In terms of biological role, receptor for MSH (alpha, beta and gamma) and ACTH. The activity of this receptor is mediated by G proteins which activate adenylate cyclase. Mediates melanogenesis, the production of eumelanin (black/brown) and phaeomelanin (red/yellow), via regulation of cAMP signaling in melanocytes. This is Melanocyte-stimulating hormone receptor (MC1R) from Papio hamadryas (Hamadryas baboon).